The sequence spans 324 residues: Concanavalin B (324 aa).

The N-terminal stretch at 1 to 25 (MGCERKALILMVVIWIMSFWTLSLA) is a signal peptide. Residues 30-311 (TEIAVYWGQR…TNIIRYLNAT (282 aa)) form the GH18 domain. Asn-309 is a glycosylation site (N-linked (GlcNAc...) asparagine).

It belongs to the glycosyl hydrolase 18 family.

In terms of biological role, may act as a carbohydrate-binding protein. The polypeptide is Concanavalin B (Canavalia ensiformis (Jack bean)).